The chain runs to 499 residues: Rhamnogalacturonate lyase A (499 aa).

Residues 1–20 form the signal peptide; the sequence is MLSKTSLLSLLSLAAGVVNA. 2 cysteine pairs are disulfide-bonded: C49–C92 and C183–C192.

The protein belongs to the polysaccharide lyase 4 family.

Its subcellular location is the secreted. The catalysed reaction is Endotype eliminative cleavage of L-alpha-rhamnopyranosyl-(1-&gt;4)-alpha-D-galactopyranosyluronic acid bonds of rhamnogalacturonan I domains in ramified hairy regions of pectin leaving L-rhamnopyranose at the reducing end and 4-deoxy-4,5-unsaturated D-galactopyranosyluronic acid at the non-reducing end.. In terms of biological role, pectinolytic enzymes consist of four classes of enzymes: pectin lyase, polygalacturonase, pectin methylesterase and rhamnogalacturonase. Degrades the rhamnogalacturonan I (RG-I) backbone of pectin. The polypeptide is Rhamnogalacturonate lyase A (rglA) (Aspergillus niger).